A 227-amino-acid chain; its full sequence is Transcriptional regulatory protein CpxR homolog (227 aa).

A Response regulatory domain is found at 3-115 (KLLLVDDDIE…ELIARIKAIL (113 aa)). 4-aspartylphosphate is present on Asp-51. Residues 128-227 (VEILSFDGIT…LRGKGYALVT (100 aa)) constitute a DNA-binding region (ompR/PhoB-type).

Post-translationally, phosphorylated.

It is found in the cytoplasm. Its function is as follows. Member of a two-component regulatory system. This chain is Transcriptional regulatory protein CpxR homolog (cpxR), found in Haemophilus influenzae (strain ATCC 51907 / DSM 11121 / KW20 / Rd).